Here is a 426-residue protein sequence, read N- to C-terminus: Tubby protein homolog 1 (426 aa).

Residues 16 to 28 (QRKMLEDKQKQKR) are required for localization to cilia in AWB sensory neurons. Residues 19-39 (MLEDKQKQKRHQSAGSVRTTS) are disordered.

This sequence belongs to the TUB family. As to quaternary structure, interacts with rgb-3. Expressed in ciliated sensory neurons.

The protein resides in the cytoplasm. It localises to the cell projection. The protein localises to the axon. It is found in the dendrite. Its subcellular location is the cilium. In terms of biological role, has a role in fat regulation independent of daf-16. Implicated in ciliar sensory function which is required for normal sensory behavior such as chemotaxis. Required for extension and growth of sensory neuronal cilia during postembryonic development, potentially via mediating signaling protein transport and localization of PI(4,5)P2 to the ciliary base. Functions in life span control via the insulin/IGF-1 pathway. Thought to be involved in neuronal trafficking. The sequence is that of Tubby protein homolog 1 from Caenorhabditis elegans.